A 159-amino-acid polypeptide reads, in one-letter code: Ribosomal RNA large subunit methyltransferase H (159 aa).

Gly108 serves as a coordination point for S-adenosyl-L-methionine.

It belongs to the RNA methyltransferase RlmH family. Homodimer.

It is found in the cytoplasm. It carries out the reaction pseudouridine(1915) in 23S rRNA + S-adenosyl-L-methionine = N(3)-methylpseudouridine(1915) in 23S rRNA + S-adenosyl-L-homocysteine + H(+). In terms of biological role, specifically methylates the pseudouridine at position 1915 (m3Psi1915) in 23S rRNA. This Lactobacillus johnsonii (strain CNCM I-12250 / La1 / NCC 533) protein is Ribosomal RNA large subunit methyltransferase H.